The chain runs to 625 residues: Baeyer-Villiger monooxygenase ATR8 (625 aa).

FAD contacts are provided by residues D112, 120-123, D132, and Y138; that span reads TWYW. An NADP(+)-binding site is contributed by 130 to 132; the sequence is QCD. NADP(+) contacts are provided by residues 266 to 272, 289 to 290, and 405 to 406; these read TGATAIQ, RT, and KR.

Belongs to the FAD-binding monooxygenase family. Requires FAD as cofactor.

It functions in the pathway mycotoxin biosynthesis. Its function is as follows. Baeyer-Villiger monooxygenase; part of the core atranone cluster (CAC) which products are predicted to catalyze most or all steps of mycotoxin atranone synthesis, starting from geranylgeranyl pyrophosphate (GGPP). The initial cyclization of GGPP to dolabellane is probably performed by the terpene cyclase ATR13. The Baeyer-Villiger oxidation near the end of the atranone synthesis, which converts atranones D and E to atranones F and G is predicted to be catalyzed by the monooxygenase ATR8. Of the CAC's other predicted gene products, the reducing PKS ATR6 might synthesize a polyketide chain. This polyketide is probably transferred onto the atranone backbone by the polyketide transferase ATR5. Other predicted CAC products include 4 oxygenases (ATR2, ATR3, ATR4, and ATR14), 3 short-chain reductases (ATR7, ATR9, and ATR10), and a methyltransferase (ATR12). These may all be involved in the various steps of atranone biosynthesis, although their specific roles must await experimental determination. In Stachybotrys chlorohalonatus (strain IBT 40285), this protein is Baeyer-Villiger monooxygenase ATR8.